The sequence spans 30 residues: Trypsin inhibitor 4 (30 aa).

3 disulfide bridges follow: C3–C20, C10–C22, and C16–C28.

It belongs to the protease inhibitor I7 (squash-type serine protease inhibitor) family.

It localises to the secreted. In terms of biological role, inhibits trypsin; probably participates in a plant defense mechanism. The polypeptide is Trypsin inhibitor 4 (Momordica charantia (Bitter gourd)).